We begin with the raw amino-acid sequence, 272 residues long: Putative phosphoenolpyruvate synthase regulatory protein (272 aa).

152–159 is an ADP binding site; sequence GVSRCGKT.

The protein belongs to the pyruvate, phosphate/water dikinase regulatory protein family. PSRP subfamily.

It carries out the reaction [pyruvate, water dikinase] + ADP = [pyruvate, water dikinase]-phosphate + AMP + H(+). The enzyme catalyses [pyruvate, water dikinase]-phosphate + phosphate + H(+) = [pyruvate, water dikinase] + diphosphate. Functionally, bifunctional serine/threonine kinase and phosphorylase involved in the regulation of the phosphoenolpyruvate synthase (PEPS) by catalyzing its phosphorylation/dephosphorylation. The chain is Putative phosphoenolpyruvate synthase regulatory protein from Pseudomonas putida (strain GB-1).